The sequence spans 1136 residues: MNELKHAVVPIDLQSFCLEGTLALWVPALENDSEDDSEAIETADDNEKLFKKECVAYDAGVYTSNKSKGSQTLRWSIFQNRTLTIFDVSLNSKKEPLSKFNVKIHFPSNVMKDGVAFSFSEHSDTTIIYAITHARVLYYIRLSKTWFQLPDARLDDDWCLCYRPISFLNQKPDLMAAISTSEICVSFFNGGLTKIILNPKDASHYEQHIDDSSYLFSLKKYLSLQAFKADYRSPNTIISMIFLSTYNVLVMLSLDYKLKVLDLSTNQCVETIELSQTILPLQSFPYLTSDHTTNSFIALYYPDNSHGSFSIYKLNANAHSFKLNVVIEKGIIPPSLPDDEFIPWMLSDFQLISSEGSQSKFLLIIAWKSNLNTVIQKCNLSLDQDESFSCVWSHSLDSFSLIEKTFFDVPTNMSSGDISEIWLQHIFAHNTSIESIQVALLSFQNSSSQVSKNKLDKFGALTISELKNAVLSSIVSTIQIEPNSDLTGYDYYEYKRLLYNEWERFAKLVAYLDHFGDEILSINFDPSNAVTYINYANKVAFIRDPYLIESFDEEPLTKLISSLETDDPSLIEGYQILDLGRSLHSCMSFSTLSEIRYSLRELVQDLPSYSLFDTLWVFYDKHIYPNVDPDYISTLIDTLVSLENPMRDIDSLIQRLRSFDIYNHSAQSPSLFLCASVARVLDSILKKFQVSIEGFIFLLSLITSQQDYELQSKFAGCDKLFLSLLEDWRLVSFLLENSALLLEKFEEEDVDSTNCNLNTMEALASVNTALQFFSALNYSECFSESQISPLHATVISSLSAIFIRDDTENDLVTELVEKLFLFKQYNACMQLIGWLNSDPIAVYLKALIYLKSKEAVKAVRCFKTTSLVLYSHTSQFAVLREFQEIAEKYHHQNLLSCYYLHLSKKLFEESAYIDALEFSLLADASKETDDEDLSIAITHETLKTACAAGKFDAAHVALMVLSTTPLKKSCLLDFVNQLTKQGKINQLLNYSMPTLRQDVDNLLERKAFQMINVESQPCWYNILFSWRYKHQNYRDAAAIIYEKLSRYISTTELIGKKERTFIIEHYLIVLNTLELLPKEDTWILVTDMSVDKEPDPNFLPQKLLTLDAIVAEYHLQLKDVAVQVTAEMSSAMNIDL.

Component of the npc107-120 complex which consists of nup85, nup107, nup120, nup131, nup132 and seh1. Interacts with nup107.

The protein localises to the nucleus. Functions as a component of the nuclear pore complex (NPC). NPC components, collectively referred to as nucleoporins (NUPs), can play the role of both NPC structural components and of docking or interaction partners for transiently associated nuclear transport factors. Active directional transport is assured by both, a Phe-Gly (FG) repeat affinity gradient for these transport factors across the NPC and a transport cofactor concentration gradient across the nuclear envelope. This is Nucleoporin nup120 (nup120) from Schizosaccharomyces pombe (strain 972 / ATCC 24843) (Fission yeast).